Here is a 396-residue protein sequence, read N- to C-terminus: 1-deoxy-D-xylulose 5-phosphate reductoisomerase (396 aa).

NADPH-binding residues include T10, G11, S12, I13, G36, K37, N38, and N124. A 1-deoxy-D-xylulose 5-phosphate-binding site is contributed by K125. E126 is an NADPH binding site. D150 serves as a coordination point for Mn(2+). The 1-deoxy-D-xylulose 5-phosphate site is built by S151, E152, S186, and H209. E152 is a binding site for Mn(2+). An NADPH-binding site is contributed by G215. 1-deoxy-D-xylulose 5-phosphate contacts are provided by S222, N227, K228, and E231. E231 is a binding site for Mn(2+).

It belongs to the DXR family. Mg(2+) serves as cofactor. Requires Mn(2+) as cofactor.

It carries out the reaction 2-C-methyl-D-erythritol 4-phosphate + NADP(+) = 1-deoxy-D-xylulose 5-phosphate + NADPH + H(+). Its pathway is isoprenoid biosynthesis; isopentenyl diphosphate biosynthesis via DXP pathway; isopentenyl diphosphate from 1-deoxy-D-xylulose 5-phosphate: step 1/6. In terms of biological role, catalyzes the NADPH-dependent rearrangement and reduction of 1-deoxy-D-xylulose-5-phosphate (DXP) to 2-C-methyl-D-erythritol 4-phosphate (MEP). The polypeptide is 1-deoxy-D-xylulose 5-phosphate reductoisomerase (Haemophilus ducreyi (strain 35000HP / ATCC 700724)).